Consider the following 387-residue polypeptide: Succinate--CoA ligase [ADP-forming] subunit beta (387 aa).

One can recognise an ATP-grasp domain in the interval 9-236; it reads KELFAKHNVP…KDATDPLELK (228 aa). ATP is bound by residues Lys45, 52 to 54, Ser94, and Glu99; that span reads GRG. Residues Asn191 and Asp205 each contribute to the Mg(2+) site. Substrate is bound by residues Asn256 and 318-320; that span reads GIT.

It belongs to the succinate/malate CoA ligase beta subunit family. In terms of assembly, heterotetramer of two alpha and two beta subunits. Requires Mg(2+) as cofactor.

The catalysed reaction is succinate + ATP + CoA = succinyl-CoA + ADP + phosphate. The enzyme catalyses GTP + succinate + CoA = succinyl-CoA + GDP + phosphate. Its pathway is carbohydrate metabolism; tricarboxylic acid cycle; succinate from succinyl-CoA (ligase route): step 1/1. In terms of biological role, succinyl-CoA synthetase functions in the citric acid cycle (TCA), coupling the hydrolysis of succinyl-CoA to the synthesis of either ATP or GTP and thus represents the only step of substrate-level phosphorylation in the TCA. The beta subunit provides nucleotide specificity of the enzyme and binds the substrate succinate, while the binding sites for coenzyme A and phosphate are found in the alpha subunit. This is Succinate--CoA ligase [ADP-forming] subunit beta from Mycolicibacterium gilvum (strain PYR-GCK) (Mycobacterium gilvum (strain PYR-GCK)).